The primary structure comprises 149 residues: MERTFLAVKPDGVQRALVGEIIRRFEAKGFKLVGLKLMNVSKDLAEQHYGEHKEKPFFPGLVQFITSGPVVAMVWEGKGVVASARKIIGATNPLNSEPGTIRGDYGVDIGRNIIHGSDAVETAQREIALWFQPAELVSWEPTLTSWIYE.

6 residues coordinate ATP: K9, F57, R85, T91, R102, and N112. H115 acts as the Pros-phosphohistidine intermediate in catalysis.

It belongs to the NDK family. In terms of assembly, homotetramer. Mg(2+) is required as a cofactor.

It localises to the cytoplasm. The catalysed reaction is a 2'-deoxyribonucleoside 5'-diphosphate + ATP = a 2'-deoxyribonucleoside 5'-triphosphate + ADP. The enzyme catalyses a ribonucleoside 5'-diphosphate + ATP = a ribonucleoside 5'-triphosphate + ADP. Major role in the synthesis of nucleoside triphosphates other than ATP. The ATP gamma phosphate is transferred to the NDP beta phosphate via a ping-pong mechanism, using a phosphorylated active-site intermediate. The protein is Nucleoside diphosphate kinase of Cyanothece sp. (strain PCC 7425 / ATCC 29141).